Reading from the N-terminus, the 754-residue chain is ATP-dependent zinc metalloprotease FtsH (754 aa).

Residues 1–9 (MKQRMKKPS) lie on the Cytoplasmic side of the membrane. The chain crosses the membrane as a helical span at residues 10–30 (LGTFILILILIGILAYVLWQF). The Extracellular segment spans residues 31-186 (LSPKLGYKSL…FDRPRGNFLS (156 aa)). A helical membrane pass occupies residues 187–207 (SFIVPYIPFLLISLFGFWLFF). The Cytoplasmic portion of the chain corresponds to 208–754 (RLSQNSQAGG…ESKIDSSKEQ (547 aa)). Residue 277–284 (GPPGTGKT) participates in ATP binding. Zn(2+) is bound at residue histidine 499. Residue glutamate 500 is part of the active site. Residues histidine 503 and aspartate 577 each contribute to the Zn(2+) site. A disordered region spans residues 713–754 (QEKSYENEDQNQNSLEAINYNIDDQDDDKNDSESKIDSSKEQ). The span at 743–754 (DSESKIDSSKEQ) shows a compositional bias: basic and acidic residues.

This sequence in the central section; belongs to the AAA ATPase family. It in the C-terminal section; belongs to the peptidase M41 family. Homohexamer. Zn(2+) serves as cofactor.

It is found in the cell membrane. Acts as a processive, ATP-dependent zinc metallopeptidase for both cytoplasmic and membrane proteins. Plays a role in the quality control of integral membrane proteins. The protein is ATP-dependent zinc metalloprotease FtsH of Mesomycoplasma conjunctivae (strain ATCC 25834 / NCTC 10147 / HRC/581) (Mycoplasma conjunctivae).